A 787-amino-acid chain; its full sequence is Probable phosphoketolase (787 aa).

It belongs to the XFP family. The cofactor is thiamine diphosphate.

This is Probable phosphoketolase from Pediococcus pentosaceus (strain ATCC 25745 / CCUG 21536 / LMG 10740 / 183-1w).